Consider the following 210-residue polypeptide: UPF0301 protein CPS_1252 (210 aa).

This sequence belongs to the UPF0301 (AlgH) family.

The chain is UPF0301 protein CPS_1252 from Colwellia psychrerythraea (strain 34H / ATCC BAA-681) (Vibrio psychroerythus).